The chain runs to 166 residues: Protein E6 (166 aa).

2 zinc fingers span residues 50–86 and 123–159; these read CNFCGKFLSHLEACEFDDKRLSLIWKGHLVYACCRWC and CQNCMRYLDSIEKLDICGRRLPFHKVRDSWKGICRLC.

It belongs to the papillomaviridae E6 protein family. Forms homodimers. Interacts with ubiquitin-protein ligase UBE3A/E6-AP; this interaction stimulates UBE3A ubiquitin activity. Interacts with host BAK1.

It is found in the host cytoplasm. The protein localises to the host nucleus. Functionally, plays a major role in the induction and maintenance of cellular transformation. E6 associates with host UBE3A/E6-AP ubiquitin-protein ligase and modulates its activity. Protects host keratinocytes from apoptosis by mediating the degradation of host BAK1. May also inhibit host immune response. This is Protein E6 from Homo sapiens (Human).